Here is a 583-residue protein sequence, read N- to C-terminus: Trehalase (583 aa).

Positions 1-23 (MPGRTWELCLLLLLGLGLGSQEA) are cleaved as a signal peptide. An N-linked (GlcNAc...) asparagine glycan is attached at Asn78. Substrate is bound by residues Arg168, 175 to 176 (WD), Asn212, and 221 to 223 (RSQ). N-linked (GlcNAc...) asparagine glycosylation is found at Asn239 and Asn261. Substrate contacts are provided by residues 286-288 (RPE) and Gly319. Asp321 (proton donor/acceptor) is an active-site residue. Asn369 carries N-linked (GlcNAc...) asparagine glycosylation. The active-site Proton donor/acceptor is Glu514. Residue Glu529 participates in substrate binding. Ser556 carries GPI-anchor amidated serine lipidation. The propeptide at 557-583 (GAKLAFLEPHCLAATLLPSLLLSLLPW) is removed in mature form.

The protein belongs to the glycosyl hydrolase 37 family. In terms of assembly, homodimer; disulfide-linked. In terms of tissue distribution, expressed in kidney, liver and small intestine. Also more weakly expressed in pancreas.

The protein resides in the cell membrane. The enzyme catalyses alpha,alpha-trehalose + H2O = alpha-D-glucose + beta-D-glucose. Intestinal trehalase is probably involved in the hydrolysis of ingested trehalose. This chain is Trehalase, found in Homo sapiens (Human).